The chain runs to 330 residues: Solute-binding protein NAS141_03721 (330 aa).

Positions Met1–Ala27 are cleaved as a signal peptide. Alpha-D-mannuronate-binding positions include Glu75, Asn97, Arg153, Arg173, Tyr196, Asn213–Glu214, and Arg240. Alpha-D-taluronate is bound by residues Glu75, Asn97, Arg153, Arg173, Tyr196, Asn213 to Glu214, and Arg240.

It belongs to the bacterial solute-binding protein 7 family. As to quaternary structure, the complex is comprised of an extracytoplasmic solute-binding protein and a heteromeric permease formed by two transmembrane proteins.

The protein resides in the periplasm. Solute-binding protein that binds D-mannuronate and D-taluronate (in vitro). Probably part of a tripartite ATP-independent periplasmic (TRAP) transport system that mediates solute transport into the cytoplasm. The protein is Solute-binding protein NAS141_03721 of Sulfitobacter sp. (strain NAS-14.1).